The following is a 429-amino-acid chain: MSKTHLTTEKFAQMGLEPEVLAGLESKGFHYCTPIQALSLPLLVEGHDLAGQAQTGTGKTIAFLAATFNYLLTHPLSNPRLVNQPRAIIMAPTRELAVQIYNDADTISASTGLKLGLAYGGEGYDKQLAVLEQGVDILIGTTGRIIDYFKSKVIDLSNIQVVVLDEADRMFDLGFIKDIRFLFRRMPAPTERLSMLFSATLSLRVQELAYEHMNHPEHVQIEPEQMTGIRIQEELFYPSNEDKMLLLLSLMEEEWPEKAIVFANTKHVCEDVHAWLENDGHRVGLLTGDVPQKKRMKILEDFTKGTLDILVATDVAARGLHIPDVTHVFNYDLPDDAEDYVHRIGRTGRAGKSGHSISLACEDYAFNLPAIEEYIHHPIPVSKYDREALLDDVTAPKRVVRNRQPVNRNMRDRQGGGNSNNRRRPPRKS.

The Q motif motif lies at glutamate 9–alanine 37. The region spanning leucine 40–valine 219 is the Helicase ATP-binding domain. Residue alanine 53–threonine 60 coordinates ATP. The short motif at aspartate 165 to aspartate 168 is the DEAD box element. Residues lysine 243–leucine 390 enclose the Helicase C-terminal domain. Residues alanine 395 to serine 429 are disordered.

The protein belongs to the DEAD box helicase family. RhlB subfamily. As to quaternary structure, component of the RNA degradosome, which is a multiprotein complex involved in RNA processing and mRNA degradation.

The protein resides in the cytoplasm. It catalyses the reaction ATP + H2O = ADP + phosphate + H(+). In terms of biological role, DEAD-box RNA helicase involved in RNA degradation. Has RNA-dependent ATPase activity and unwinds double-stranded RNA. This Aeromonas salmonicida (strain A449) protein is ATP-dependent RNA helicase RhlB.